The chain runs to 350 residues: Ion-translocating oxidoreductase complex subunit D (350 aa).

A run of 4 helical transmembrane segments spans residues 20 to 40, 42 to 62, 89 to 109, and 123 to 143; these read IMLL…WFFG, GTVL…AAIL, IPPL…VVIA, and PAMI…TSWL. FMN phosphoryl threonine is present on Thr187. 5 helical membrane passes run 214 to 234, 242 to 262, 267 to 287, 301 to 321, and 322 to 342; these read VLAG…GLFL, WHIP…GWLF, LASP…FFIL, LIFG…GGYP, and DGVA…DYYT.

Belongs to the NqrB/RnfD family. In terms of assembly, the complex is composed of six subunits: RnfA, RnfB, RnfC, RnfD, RnfE and RnfG. It depends on FMN as a cofactor.

Its subcellular location is the cell inner membrane. In terms of biological role, part of a membrane-bound complex that couples electron transfer with translocation of ions across the membrane. This chain is Ion-translocating oxidoreductase complex subunit D, found in Klebsiella pneumoniae (strain 342).